The chain runs to 183 residues: UPF0302 protein BH1670 (183 aa).

Belongs to the UPF0302 family.

This chain is UPF0302 protein BH1670, found in Halalkalibacterium halodurans (strain ATCC BAA-125 / DSM 18197 / FERM 7344 / JCM 9153 / C-125) (Bacillus halodurans).